The primary structure comprises 212 residues: uncharacterized protein (212 aa).

The first 21 residues, 1–21, serve as a signal peptide directing secretion; it reads MRRLTAFGLALLLLASGVARG.

It to E.coli YfaT and T.maritima TM0986.

This is an uncharacterized protein from Pseudomonas aeruginosa (strain ATCC 15692 / DSM 22644 / CIP 104116 / JCM 14847 / LMG 12228 / 1C / PRS 101 / PAO1).